Consider the following 151-residue polypeptide: Probable cGMP 3',5'-cyclic phosphodiesterase subunit delta (151 aa).

It belongs to the PDE6D/unc-119 family. Interacts with Pde6.

It localises to the nucleus. The protein localises to the cytoplasm. The protein is Probable cGMP 3',5'-cyclic phosphodiesterase subunit delta of Drosophila persimilis (Fruit fly).